A 408-amino-acid chain; its full sequence is Exodeoxyribonuclease 7 large subunit (408 aa).

This sequence belongs to the XseA family. Heterooligomer composed of large and small subunits.

It localises to the cytoplasm. The enzyme catalyses Exonucleolytic cleavage in either 5'- to 3'- or 3'- to 5'-direction to yield nucleoside 5'-phosphates.. Bidirectionally degrades single-stranded DNA into large acid-insoluble oligonucleotides, which are then degraded further into small acid-soluble oligonucleotides. The sequence is that of Exodeoxyribonuclease 7 large subunit from Alkaliphilus oremlandii (strain OhILAs) (Clostridium oremlandii (strain OhILAs)).